A 353-amino-acid polypeptide reads, in one-letter code: Inactive metacaspase-4 (353 aa).

A lipid anchor (N-myristoyl glycine) is attached at glycine 2.

Belongs to the peptidase C14B family. In terms of processing, palmitoylated. Proteolytic cleavage by MCA3 occurs prior or during secretion and requires MCA4 membrane localization. Cleavage is dispensable for secretion and parasite growth and virulence in the mammalian host. In vitro, can be cleaved by MCA2 but specifically cleaved by MCA3 in vivo.

It localises to the cell projection. The protein resides in the cilium. It is found in the flagellum membrane. Its subcellular location is the secreted. Functionally, inactive metacaspase which plays a role in parasite bloodstream form growth and in parasite virulence within the mammalian host. This chain is Inactive metacaspase-4, found in Trypanosoma brucei brucei.